Here is a 179-residue protein sequence, read N- to C-terminus: Large ribosomal subunit protein uL5 (179 aa).

It belongs to the universal ribosomal protein uL5 family. Part of the 50S ribosomal subunit; part of the 5S rRNA/L5/L18/L25 subcomplex. Contacts the 5S rRNA and the P site tRNA. Forms a bridge to the 30S subunit in the 70S ribosome.

In terms of biological role, this is one of the proteins that bind and probably mediate the attachment of the 5S RNA into the large ribosomal subunit, where it forms part of the central protuberance. In the 70S ribosome it contacts protein S13 of the 30S subunit (bridge B1b), connecting the 2 subunits; this bridge is implicated in subunit movement. Contacts the P site tRNA; the 5S rRNA and some of its associated proteins might help stabilize positioning of ribosome-bound tRNAs. This Bacillus mycoides (strain KBAB4) (Bacillus weihenstephanensis) protein is Large ribosomal subunit protein uL5.